Consider the following 346-residue polypeptide: MKFAILFGGNSYEHEISIVSAVVLKKVINQNLEFIFCDEERRFYHIPSEKMNSKTFSTKAYKKEKELFIKQGGFFSKGFLKENKLECECVINLIHGRDGEDGKIAALFEFYSIKFIGPRLEASVLSFNKELTKLYAKSVGVKTLDYTMVRKGQNSKEKLSFPCIIKPARLGSSIGISIVKDEKDLEYAKDVGFEFDNDLVVEEFKNNIKEYNLAGCMINDEFVFSIIEEPKKKEFLDFEQKYLSFSGHNELIEANLSEELKEKLKDSFKKIYNPLFKGALIRCDFFILDNEIYLNEINPNPGSLANYLFKDFSTTLNALADQISLEKMIKISYNFLHSINGQKGKL.

In terms of domain architecture, ATP-grasp spans 133–327 (KLYAKSVGVK…ALADQISLEK (195 aa)). Position 159–211 (159–211 (LSFPCIIKPARLGSSIGISIVKDEKDLEYAKDVGFEFDNDLVVEEFKNNIKEY)) interacts with ATP. The Mg(2+) site is built by aspartate 284, glutamate 296, and asparagine 298.

The protein belongs to the D-alanine--D-alanine ligase family. Mg(2+) serves as cofactor. Mn(2+) is required as a cofactor.

The protein localises to the cytoplasm. It carries out the reaction 2 D-alanine + ATP = D-alanyl-D-alanine + ADP + phosphate + H(+). It functions in the pathway cell wall biogenesis; peptidoglycan biosynthesis. Its function is as follows. Cell wall formation. This is D-alanine--D-alanine ligase from Campylobacter jejuni subsp. jejuni serotype O:23/36 (strain 81-176).